The sequence spans 275 residues: Trypsin-3 (275 aa).

Positions 1–22 are cleaved as a signal peptide; that stretch reads MISNKIAILLAVLVVAVACAQA. Residues 23–48 constitute a propeptide, activation peptide; the sequence is RVALKHRSVQALPRFLPRPKYDVGHR. Positions 49-274 constitute a Peptidase S1 domain; it reads IVGGFEIDVS…VRDWVRENSG (226 aa). A disulfide bridge links C74 with C90. Active-site charge relay system residues include H89 and D134. Intrachain disulfides connect C199–C215 and C226–C250. S230 serves as the catalytic Charge relay system.

It belongs to the peptidase S1 family. As to expression, expressed in the midgut. Expression levels drop a few hours after blood feeding and pick up again 28 hours later.

The protein localises to the secreted. The catalysed reaction is Preferential cleavage: Arg-|-Xaa, Lys-|-Xaa.. Functionally, constitutive trypsin that is expressed 2 days after emergence, coinciding with host seeking behavior of the female. The polypeptide is Trypsin-3 (TRYP3) (Anopheles gambiae (African malaria mosquito)).